A 723-amino-acid polypeptide reads, in one-letter code: Peroxisomal bifunctional enzyme (723 aa).

An enoyl-CoA hydratase / isomerase region spans residues 1–282; it reads MAEYTRLHNA…LAERKANKWS (282 aa). K38 is subject to N6-succinyllysine. G101 serves as a coordination point for substrate. K165 bears the N6-acetyllysine; alternate mark. K165 carries the N6-succinyllysine; alternate modification. K171 carries the N6-acetyllysine modification. An N6-acetyllysine; alternate modification is found at K219. K219 is subject to N6-succinyllysine; alternate. N6-acetyllysine is present on K250. N6-succinyllysine is present on residues K280 and K290. Residues 283-572 are 3-hydroxyacyl-CoA dehydrogenase; that stretch reads TPSGASWKTA…DVLCELGRFG (290 aa). K346, K350, and K464 each carry N6-acetyllysine. Position 532 is an N6-succinyllysine (K532). Phosphothreonine is present on T548. K577 is modified (N6-succinyllysine). 3 positions are modified to N6-acetyllysine; alternate: K584, K591, and K710. N6-succinyllysine; alternate is present on residues K584, K591, and K710. Positions 699–723 are disordered; that stretch reads KKLASQGNPPQKEWQSLAGSPSSKL. The span at 703 to 723 shows a compositional bias: polar residues; sequence SQGNPPQKEWQSLAGSPSSKL. S718 carries the phosphoserine modification. The Microbody targeting signal motif lies at 721–723; that stretch reads SKL. An N6-succinyllysine modification is found at K722.

This sequence in the N-terminal section; belongs to the enoyl-CoA hydratase/isomerase family. In the C-terminal section; belongs to the 3-hydroxyacyl-CoA dehydrogenase family. In terms of assembly, monomer. Acetylated, leading to enhanced enzyme activity. Acetylation is enhanced by up to 80% after treatment either with trichostin A (TSA) or with nicotinamide (NAM) with highest increase on Lys-346. Acetylation and enzyme activity increased by about 1.5% on addition of fatty acids.

The protein resides in the peroxisome. It carries out the reaction a (3S)-3-hydroxyacyl-CoA = a (2E)-enoyl-CoA + H2O. It catalyses the reaction a 4-saturated-(3S)-3-hydroxyacyl-CoA = a (3E)-enoyl-CoA + H2O. The catalysed reaction is a (3Z)-enoyl-CoA = a 4-saturated (2E)-enoyl-CoA. The enzyme catalyses a (3E)-enoyl-CoA = a 4-saturated (2E)-enoyl-CoA. It carries out the reaction a (3S)-3-hydroxyacyl-CoA + NAD(+) = a 3-oxoacyl-CoA + NADH + H(+). It catalyses the reaction (2S,3S)-3-hydroxy-2-methylbutanoyl-CoA = (2E)-2-methylbut-2-enoyl-CoA + H2O. The catalysed reaction is (3S)-hydroxyhexadecanoyl-CoA + NAD(+) = 3-oxohexadecanoyl-CoA + NADH + H(+). The enzyme catalyses (3S)-hydroxyhexadecanoyl-CoA = (2E)-hexadecenoyl-CoA + H2O. It carries out the reaction (2E)-hexadecenedioyl-CoA + H2O = (3S)-hydroxyhexadecanedioyl-CoA. It catalyses the reaction (3S)-hydroxyhexadecanedioyl-CoA + NAD(+) = 3-oxohexadecanedioyl-CoA + NADH + H(+). The catalysed reaction is (3E,5Z)-tetradecadienoyl-CoA = (2E,5Z)-tetradecadienoyl-CoA. The enzyme catalyses (3E,5Z)-octadienoyl-CoA = (2E,5Z)-octadienoyl-CoA. It carries out the reaction (3S)-hydroxydecanoyl-CoA + NAD(+) = 3-oxodecanoyl-CoA + NADH + H(+). It catalyses the reaction (3E)-decenoyl-CoA = (2E)-decenoyl-CoA. The catalysed reaction is (3Z)-hexenoyl-CoA = (2E)-hexenoyl-CoA. The enzyme catalyses (3E)-hexenoyl-CoA = (2E)-hexenoyl-CoA. It carries out the reaction (3S)-hydroxydecanoyl-CoA = (2E)-decenoyl-CoA + H2O. It catalyses the reaction (3S)-hydroxyhexanoyl-CoA = (2E)-hexenoyl-CoA + H2O. The protein operates within lipid metabolism; fatty acid beta-oxidation. Its activity is regulated as follows. Enzyme activity enhanced by acetylation. In terms of biological role, peroxisomal trifunctional enzyme possessing 2-enoyl-CoA hydratase, 3-hydroxyacyl-CoA dehydrogenase, and delta 3, delta 2-enoyl-CoA isomerase activities. Catalyzes two of the four reactions of the long chain fatty acids peroxisomal beta-oxidation pathway. Can also use branched-chain fatty acids such as 2-methyl-2E-butenoyl-CoA as a substrate, which is hydrated into (2S,3S)-3-hydroxy-2-methylbutanoyl-CoA. Optimal isomerase for 2,5 double bonds into 3,5 form isomerization in a range of enoyl-CoA species. Also able to isomerize both 3-cis and 3-trans double bonds into the 2-trans form in a range of enoyl-CoA species. Regulates the amount of medium-chain dicarboxylic fatty acids which are essential regulators of all fatty acid oxidation pathways. Also involved in the degradation of long-chain dicarboxylic acids through peroxisomal beta-oxidation. The chain is Peroxisomal bifunctional enzyme (EHHADH) from Pongo abelii (Sumatran orangutan).